The chain runs to 388 residues: MKLSKRIENLPPYLFVQISKKIAEKRAKGEEVISFAIGDPDLPTPKHILAELCKAAEDPANHRYPETEGLPVLRKAMAEWYEKRFGVKLNPDTEVLPLIGSKEGIGHAAWCFLDPGDVALVPDPAYPVYAISSQLAGAEVFYMPLNKENNFLPDFNAIPQDVLSKAKILWINYPNNPTGAVAGLDFFKEAAEFAAKHNLAVCHDGPYSEIAFDGYRPVSFLEADGAKEVGIEFHSLSKSYNMTGWRIGMAVGNAKMIDALRRFKSNLDSGIPQAIQLMAIAALNGSQDVISQNCAVYQRRRDRLVEALRNIGMEVTAPKASLYIWAPVPEGYTSASFATELLDKTGVVVTPGTGYGTSGEGYIRLSLTVPDEQLEKGIAKLANFKSQA.

Positions 13, 38, 102, 126, and 176 each coordinate substrate. Residues 101–102 (SK), tyrosine 126, asparagine 176, tyrosine 207, and 235–237 (SLS) each bind pyridoxal 5'-phosphate. Lysine 238 is subject to N6-(pyridoxal phosphate)lysine. Arginine 246 is a pyridoxal 5'-phosphate binding site. Residue arginine 364 coordinates substrate.

The protein belongs to the class-I pyridoxal-phosphate-dependent aminotransferase family. LL-diaminopimelate aminotransferase subfamily. In terms of assembly, homodimer. Requires pyridoxal 5'-phosphate as cofactor.

It catalyses the reaction (2S,6S)-2,6-diaminopimelate + 2-oxoglutarate = (S)-2,3,4,5-tetrahydrodipicolinate + L-glutamate + H2O + H(+). Its pathway is amino-acid biosynthesis; L-lysine biosynthesis via DAP pathway; LL-2,6-diaminopimelate from (S)-tetrahydrodipicolinate (aminotransferase route): step 1/1. Functionally, involved in the synthesis of meso-diaminopimelate (m-DAP or DL-DAP), required for both lysine and peptidoglycan biosynthesis. Catalyzes the direct conversion of tetrahydrodipicolinate to LL-diaminopimelate. The chain is LL-diaminopimelate aminotransferase from Dehalococcoides mccartyi (strain ATCC BAA-2266 / KCTC 15142 / 195) (Dehalococcoides ethenogenes (strain 195)).